Here is a 218-residue protein sequence, read N- to C-terminus: Riboflavin kinase (218 aa).

The disordered stretch occupies residues 1–27; it reads MRPDGPRDPVAGPDSGPEPPYPVRLSG. Mg(2+) is bound by residues Thr-44 and Asn-46. Glu-120 functions as the Nucleophile in the catalytic mechanism.

Belongs to the flavokinase family. Zn(2+) serves as cofactor. The cofactor is Mg(2+).

The catalysed reaction is riboflavin + ATP = FMN + ADP + H(+). The protein operates within cofactor biosynthesis; FMN biosynthesis; FMN from riboflavin (ATP route): step 1/1. Functionally, catalyzes the phosphorylation of riboflavin (vitamin B2) to form flavin mononucleotide (FMN) coenzyme. The sequence is that of Riboflavin kinase (fmn1) from Neosartorya fischeri (strain ATCC 1020 / DSM 3700 / CBS 544.65 / FGSC A1164 / JCM 1740 / NRRL 181 / WB 181) (Aspergillus fischerianus).